An 821-amino-acid chain; its full sequence is Ent-pimara-8(14),15-diene synthase (821 aa).

Mg(2+) contacts are provided by Asp-556, Asp-560, Asn-701, Thr-705, and Glu-709. Residues 556-560 carry the DDXXD motif motif; sequence DDFFD.

It belongs to the terpene synthase family. The cofactor is Mg(2+). In terms of tissue distribution, highly expressed in roots, at intermediate levels in stems and at lower levels in leaves.

It catalyses the reaction ent-copalyl diphosphate = ent-pimara-8(14),15-diene + diphosphate. It participates in secondary metabolite biosynthesis; terpenoid biosynthesis. Its function is as follows. Involved in the biosynthesis of ent-kaurene diterpenoids natural products. Catalyzes the conversion of ent-copalyl diphosphate to ent-pimara-8(14),15-diene. This Oryza sativa subsp. japonica (Rice) protein is Ent-pimara-8(14),15-diene synthase.